Consider the following 295-residue polypeptide: Small ribosomal subunit protein uS2 (295 aa).

Belongs to the universal ribosomal protein uS2 family. Component of the small ribosomal subunit. Mature ribosomes consist of a small (40S) and a large (60S) subunit. The 40S subunit contains about 33 different proteins and 1 molecule of RNA (18S). The 60S subunit contains about 49 different proteins and 3 molecules of RNA (25S, 5.8S and 5S). Interacts with RPS21.

Its subcellular location is the cytoplasm. Functionally, required for the assembly and/or stability of the 40S ribosomal subunit. Required for the processing of the 20S rRNA-precursor to mature 18S rRNA in a late step of the maturation of 40S ribosomal subunits. In Paracoccidioides brasiliensis (strain Pb03), this protein is Small ribosomal subunit protein uS2.